A 341-amino-acid chain; its full sequence is Glucokinase (341 aa).

Residue 7–12 (GDIGGT) coordinates ATP.

It belongs to the bacterial glucokinase family.

It localises to the cytoplasm. The enzyme catalyses D-glucose + ATP = D-glucose 6-phosphate + ADP + H(+). This Nostoc punctiforme (strain ATCC 29133 / PCC 73102) protein is Glucokinase.